The primary structure comprises 187 residues: Meiotically up-regulated protein C1442.13c (187 aa).

Disordered regions lie at residues 15 to 46 and 119 to 145; these read QWEN…LSNE and IQEG…PAIN. The segment covering 26 to 41 has biased composition (basic residues); it reads PPRKPKIVQPKKKPSK. Positions 145–187 constitute a G-patch domain; sequence NNGKGKQLLEMMGWSRGKGLGSENQGMVDPVVAVVKNNKQGLH.

The protein resides in the nucleus. It localises to the cytoplasm. The protein localises to the cytoskeleton. It is found in the microtubule organizing center. Its subcellular location is the spindle pole body. Functionally, has a role in meiosis and sporulation. Required for meiotic chromosome segregation. This Schizosaccharomyces pombe (strain 972 / ATCC 24843) (Fission yeast) protein is Meiotically up-regulated protein C1442.13c.